The chain runs to 199 residues: uncharacterized protein (199 aa).

To M.jannaschii MJ1356.

This is an uncharacterized protein from Methanocaldococcus jannaschii (strain ATCC 43067 / DSM 2661 / JAL-1 / JCM 10045 / NBRC 100440) (Methanococcus jannaschii).